The primary structure comprises 413 residues: F-box protein CPR1 (413 aa).

In terms of domain architecture, F-box spans 1 to 48 (MATIPMDIVNDIFLRLPAKTLVRCRALSKPCYHLINDPDFIESHLHRV).

Part of a SCF (ASK-cullin-F-box) protein ligase complex. Interacts with SKP1A/ASK1, SPK1B/ASK2, ASK9, ASK10, ASK11, ASK13, ASK14, ASK16, ASK17, ASK18 and ASK19. Interacts with TRAF1B. In terms of tissue distribution, expressed in seedling, root, stem, leaves, inflorescence and silique, especially in veins and trichomes.

It localises to the cytoplasm. Its subcellular location is the nucleus. Its pathway is protein modification; protein ubiquitination. Its function is as follows. Component of SCF(ASK-cullin-F-box) E3 ubiquitin ligase complexes, which may mediate the ubiquitination and subsequent proteasomal degradation of target proteins. Regulates negatively both salicylic acid (SA)-dependent and SA-independent defense signaling. The protein is F-box protein CPR1 (CPR1) of Arabidopsis thaliana (Mouse-ear cress).